The primary structure comprises 182 residues: Large ribosomal subunit protein uL15 (182 aa).

The disordered stretch occupies residues 1–52 (MDLSSLRPAKGAVKNKKRIGRGPGSGNGTTAGKGNKGQQSRSGYTRPVSEGG). Gly residues predominate over residues 21 to 35 (RGPGSGNGTTAGKGN).

The protein belongs to the universal ribosomal protein uL15 family. Part of the 50S ribosomal subunit.

In terms of biological role, binds to the 23S rRNA. This Chlorobium phaeobacteroides (strain BS1) protein is Large ribosomal subunit protein uL15.